Consider the following 1157-residue polypeptide: Voltage-dependent calcium channel subunit alpha-2/delta-2 (1157 aa).

The N-terminal stretch at 1 to 18 is a signal peptide; that stretch reads MAVPARTCGASWPGPVRT. The segment at 1–37 is disordered; sequence MAVPARTCGASWPGPVRTARPWPGRGPRPCPDPRGPA. Over 19-1119 the chain is Extracellular; that stretch reads ARPWPGRGPR…TEDTSDCGRG (1101 aa). The span at 24–34 shows a compositional bias: pro residues; the sequence is GRGPRPCPDPR. A glycan (N-linked (GlcNAc...) asparagine) is linked at Asn205. The 179-residue stretch at 294–472 folds into the VWFA domain; sequence DMVIIVDVSG…INTQEYLDVL (179 aa). Residues Asp300, Ser302, and Ser304 each coordinate a divalent metal cation. Residues 300-304 carry the MIDAS-like motif motif; sequence DVSGS. N-linked (GlcNAc...) asparagine glycosylation is found at Asn389, Asn421, Asn510, Asn543, Asn627, and Asn864. The cysteines at positions 446 and 1104 are disulfide-linked. In terms of domain architecture, Cache spans 488 to 577; sequence WTNVYEDALG…KPQITNFREP (90 aa). A helical membrane pass occupies residues 1120–1140; it reads ASFPPSLGVLVSLQLLLLLGL. Over 1141-1157 the chain is Cytoplasmic; it reads PPRPQPQIHSFTPSRRL.

Belongs to the calcium channel subunit alpha-2/delta family. As to quaternary structure, dimer formed of alpha-2-2 and delta-2 chains; disulfide-linked. Voltage-dependent calcium channels are multisubunit complexes, consisting of alpha-1 (CACNA1), alpha-2 (CACNA2D), beta (CACNB) and delta (CACNA2D) subunits in a 1:1:1:1 ratio. In terms of processing, N-glycosylated. May be proteolytically processed into subunits alpha-2-2 and delta-2 that are disulfide-linked. It is however unclear whether such cleavage really takes place in vivo and has a functional role. As to expression, in heart, it is highly expressed in atrium and at lower level in ventricle.

The protein resides in the membrane. Its function is as follows. The alpha-2/delta subunit of voltage-dependent calcium channels regulates calcium current density and activation/inactivation kinetics of the calcium channel. Acts as a regulatory subunit for P/Q-type calcium channel (CACNA1A), N-type (CACNA1B), L-type (CACNA1C OR CACNA1D) and possibly T-type (CACNA1G). Overexpression induces apoptosis. The polypeptide is Voltage-dependent calcium channel subunit alpha-2/delta-2 (Cacna2d2) (Rattus norvegicus (Rat)).